Here is a 90-residue protein sequence, read N- to C-terminus: Small ribosomal subunit protein uS15 (90 aa).

The protein belongs to the universal ribosomal protein uS15 family. In terms of assembly, part of the 30S ribosomal subunit. Forms a bridge to the 50S subunit in the 70S ribosome, contacting the 23S rRNA.

Functionally, one of the primary rRNA binding proteins, it binds directly to 16S rRNA where it helps nucleate assembly of the platform of the 30S subunit by binding and bridging several RNA helices of the 16S rRNA. Forms an intersubunit bridge (bridge B4) with the 23S rRNA of the 50S subunit in the ribosome. The sequence is that of Small ribosomal subunit protein uS15 from Paraburkholderia xenovorans (strain LB400).